Reading from the N-terminus, the 545-residue chain is CTP synthase (545 aa).

Residues 1–265 (MTKYIFITGG…DEIVVKKLSL (265 aa)) form an amidoligase domain region. S13 lines the CTP pocket. S13 contributes to the UTP binding site. Residues 14–19 (SLGKGI) and D71 each bind ATP. D71 and E139 together coordinate Mg(2+). CTP contacts are provided by residues 146 to 148 (DIE), 186 to 191 (KTKPTQ), and K222. Residues 186-191 (KTKPTQ) and K222 each bind UTP. In terms of domain architecture, Glutamine amidotransferase type-1 spans 290-541 (KIAMVGKYTE…VFAARIHHQE (252 aa)). G351 contacts L-glutamine. The Nucleophile; for glutamine hydrolysis role is filled by C378. Residues 379-382 (LGMQ), E402, and R469 contribute to the L-glutamine site. Residues H514 and E516 contribute to the active site.

It belongs to the CTP synthase family. As to quaternary structure, homotetramer.

The catalysed reaction is UTP + L-glutamine + ATP + H2O = CTP + L-glutamate + ADP + phosphate + 2 H(+). It carries out the reaction L-glutamine + H2O = L-glutamate + NH4(+). The enzyme catalyses UTP + NH4(+) + ATP = CTP + ADP + phosphate + 2 H(+). Its pathway is pyrimidine metabolism; CTP biosynthesis via de novo pathway; CTP from UDP: step 2/2. Its activity is regulated as follows. Allosterically activated by GTP, when glutamine is the substrate; GTP has no effect on the reaction when ammonia is the substrate. The allosteric effector GTP functions by stabilizing the protein conformation that binds the tetrahedral intermediate(s) formed during glutamine hydrolysis. Inhibited by the product CTP, via allosteric rather than competitive inhibition. In terms of biological role, catalyzes the ATP-dependent amination of UTP to CTP with either L-glutamine or ammonia as the source of nitrogen. Regulates intracellular CTP levels through interactions with the four ribonucleotide triphosphates. The polypeptide is CTP synthase (Legionella pneumophila (strain Lens)).